A 125-amino-acid polypeptide reads, in one-letter code: UPF0738 protein GK0828 (125 aa).

Belongs to the UPF0738 family.

The sequence is that of UPF0738 protein GK0828 from Geobacillus kaustophilus (strain HTA426).